A 306-amino-acid chain; its full sequence is MFLAQPRGFCAGVVRAIEIVERALEKYGPPVYVRHEIVHNKYVVESLKAKGAIFVEELSEVPPKAVTVFSAHGVARSIEEEAAARDLPVLNATCPLVTKVHNQGKRYTSKGRTLILIGHAGHPEVEGTMGQVPGPVLLVQNLDDVAALTLPPETPVAYITQTTLSVDDTKDIIVALSKKFHDIEGPDTRDICYATQNRQSAVRQMSKLVDLILVVGANNSSNSNRLREIGTEAGIPSYLIADGSELDPAWLDGKKAVGITAGASAPEVLVDDVIEALRRIVPVTVSVLPGREENIEFVLPAELATA.

C10 contacts [4Fe-4S] cluster. (2E)-4-hydroxy-3-methylbut-2-enyl diphosphate-binding residues include H39 and H72. 2 residues coordinate dimethylallyl diphosphate: H39 and H72. H39 and H72 together coordinate isopentenyl diphosphate. A [4Fe-4S] cluster-binding site is contributed by C94. H122 contributes to the (2E)-4-hydroxy-3-methylbut-2-enyl diphosphate binding site. Dimethylallyl diphosphate is bound at residue H122. H122 serves as a coordination point for isopentenyl diphosphate. Catalysis depends on E124, which acts as the Proton donor. T162 provides a ligand contact to (2E)-4-hydroxy-3-methylbut-2-enyl diphosphate. Position 192 (C192) interacts with [4Fe-4S] cluster. (2E)-4-hydroxy-3-methylbut-2-enyl diphosphate-binding residues include S220, S221, N222, and S264. Residues S220, S221, N222, and S264 each contribute to the dimethylallyl diphosphate site. Residues S220, S221, N222, and S264 each contribute to the isopentenyl diphosphate site.

This sequence belongs to the IspH family. [4Fe-4S] cluster serves as cofactor.

It catalyses the reaction isopentenyl diphosphate + 2 oxidized [2Fe-2S]-[ferredoxin] + H2O = (2E)-4-hydroxy-3-methylbut-2-enyl diphosphate + 2 reduced [2Fe-2S]-[ferredoxin] + 2 H(+). The enzyme catalyses dimethylallyl diphosphate + 2 oxidized [2Fe-2S]-[ferredoxin] + H2O = (2E)-4-hydroxy-3-methylbut-2-enyl diphosphate + 2 reduced [2Fe-2S]-[ferredoxin] + 2 H(+). Its pathway is isoprenoid biosynthesis; dimethylallyl diphosphate biosynthesis; dimethylallyl diphosphate from (2E)-4-hydroxy-3-methylbutenyl diphosphate: step 1/1. It participates in isoprenoid biosynthesis; isopentenyl diphosphate biosynthesis via DXP pathway; isopentenyl diphosphate from 1-deoxy-D-xylulose 5-phosphate: step 6/6. Catalyzes the conversion of 1-hydroxy-2-methyl-2-(E)-butenyl 4-diphosphate (HMBPP) into a mixture of isopentenyl diphosphate (IPP) and dimethylallyl diphosphate (DMAPP). Acts in the terminal step of the DOXP/MEP pathway for isoprenoid precursor biosynthesis. The chain is 4-hydroxy-3-methylbut-2-enyl diphosphate reductase 1 from Rhodopseudomonas palustris (strain ATCC BAA-98 / CGA009).